Here is a 372-residue protein sequence, read N- to C-terminus: 4-hydroxy-3-methylbut-2-en-1-yl diphosphate synthase (flavodoxin) (372 aa).

[4Fe-4S] cluster-binding residues include C270, C273, C305, and E312.

It belongs to the IspG family. [4Fe-4S] cluster serves as cofactor.

The catalysed reaction is (2E)-4-hydroxy-3-methylbut-2-enyl diphosphate + oxidized [flavodoxin] + H2O + 2 H(+) = 2-C-methyl-D-erythritol 2,4-cyclic diphosphate + reduced [flavodoxin]. The protein operates within isoprenoid biosynthesis; isopentenyl diphosphate biosynthesis via DXP pathway; isopentenyl diphosphate from 1-deoxy-D-xylulose 5-phosphate: step 5/6. Converts 2C-methyl-D-erythritol 2,4-cyclodiphosphate (ME-2,4cPP) into 1-hydroxy-2-methyl-2-(E)-butenyl 4-diphosphate. This chain is 4-hydroxy-3-methylbut-2-en-1-yl diphosphate synthase (flavodoxin), found in Escherichia coli O8 (strain IAI1).